Here is a 2979-residue protein sequence, read N- to C-terminus: Polyketide synthase-nonribosomal peptide synthetase TwmB (2979 aa).

In terms of domain architecture, Ketosynthase family 3 (KS3) spans 5–435 (GAEIAIIGSG…GTNAHAILES (431 aa)). Active-site for beta-ketoacyl synthase activity residues include cysteine 176, histidine 315, and histidine 355. A malonyl-CoA:ACP transacylase (MAT) domain region spans residues 549 to 864 (VFTGQGAQWA…PYTGLFTRGV (316 aa)). Catalysis depends on serine 643, which acts as the For malonyltransferase activity. The N-terminal hotdog fold stretch occupies residues 936-1070 (HDLLGHLTPN…GRVRIHLGEA (135 aa)). Residues 936-1234 (HDLLGHLTPN…ECVPFSRQTA (299 aa)) are dehydratase (DH) domain. In terms of domain architecture, PKS/mFAS DH spans 936 to 1235 (HDLLGHLTPN…CVPFSRQTAK (300 aa)). Catalysis depends on histidine 968, which acts as the Proton acceptor; for dehydratase activity. The segment at 1085-1235 (LVSVSEKKFY…CVPFSRQTAK (151 aa)) is C-terminal hotdog fold. Aspartate 1141 acts as the Proton donor; for dehydratase activity in catalysis. The inactive methyltransferase (MT) domain stretch occupies residues 1387–1572 (NFTAHLAGIL…GIDTSTVEQP (186 aa)). Positions 2098-2271 (TYWLVGLTGG…AASVMDIGAV (174 aa)) are ketoreductase (KR)domain. Positions 2380-2465 (RNNEEAYGIV…ELVDTATEAI (86 aa)) constitute a Carrier domain. Position 2425 is an O-(pantetheine 4'-phosphoryl)serine (serine 2425). The disordered stretch occupies residues 2476–2497 (YPAEQTSSQNSDSGQDMASSFD). Polar residues predominate over residues 2479-2497 (EQTSSQNSDSGQDMASSFD). The condensation stretch occupies residues 2534–2970 (KSIPVSFTQA…MTLGQAALAE (437 aa)).

As to quaternary structure, interacts with TwmE. The cofactor is pantetheine 4'-phosphate.

It catalyses the reaction 5-aminopentanoate + 7 malonyl-CoA + acetyl-CoA + 11 NADPH + 17 H(+) = wortmanamide A + 7 CO2 + 11 NADP(+) + 8 CoA + 6 H2O. The catalysed reaction is 5-aminopentanoate + 8 malonyl-CoA + acetyl-CoA + 13 NADPH + 20 H(+) = wortmanamide B + 8 CO2 + 13 NADP(+) + 9 CoA + 7 H2O. Its pathway is secondary metabolite biosynthesis. Polyketide synthase-nonribosomal peptide synthetase; part of the gene cluster that mediates the biosynthesis of wortmanamides A and B, reduced long-chain polyketides amidated with a specific omega-amino acid, 5-aminopentanoic acid (5PA). The PKS modules of TwmB are involved in the synthesis of the polyketide backbone, whereas the non-canonical C domain of TwmB is a bonafide condensation domain that specifically selects 5PA and catalyzes amidation to release polyketide chain. The C domain clearly prefers C16 and C18 fatty acyl substrates, which is consistent with simultaneous formation of both octaketide and nonaketide acyl amides wortmanamides A and B. Because TwmB lacks a designated enoylreductase (ER) domain, the required activity is provided the enoyl reductase TwmE. The roles of the remaining enzymes have still to be clarified. The chain is Polyketide synthase-nonribosomal peptide synthetase TwmB from Talaromyces wortmannii (Penicillium wortmannii).